The sequence spans 320 residues: Tyrosine phosphatase H3 (320 aa).

The 288-residue stretch at 22–309 (NFWEFVRLEH…AFCYKAVRYA (288 aa)) folds into the Tyrosine-protein phosphatase domain. The active-site Phosphocysteine intermediate is the Cys250.

Belongs to the protein-tyrosine phosphatase family.

The enzyme catalyses O-phospho-L-tyrosyl-[protein] + H2O = L-tyrosyl-[protein] + phosphate. Suppresses host immune cell adhesion and phagocytosis. This chain is Tyrosine phosphatase H3 (H3), found in Microplitis demolitor (Parasitoid wasp).